The chain runs to 461 residues: Complement C1r subcomponent-like protein (461 aa).

An N-terminal signal peptide occupies residues 1 to 22 (MCWLLLWGILHTCPTQASVLLA). Positions 23–139 (QQFPQQLTSP…KGFLALYQAA (117 aa)) constitute a CUB domain. 2 disulfides stabilise this stretch: Cys-71-Cys-89 and Cys-164-Cys-197. The 62-residue stretch at 138 to 199 (AAVSQPNGDA…RGEEVPECVP (62 aa)) folds into the Sushi domain. In terms of domain architecture, Peptidase S1 spans 214–453 (TFGSSRAKPG…YVDWIKGVIE (240 aa)). The active-site Charge relay system is the His-252. Asn-265 carries an N-linked (GlcNAc...) asparagine glycan. The Charge relay system role is filled by Asp-308. Asn-332 carries N-linked (GlcNAc...) asparagine glycosylation. 2 disulfide bridges follow: Cys-371–Cys-390 and Cys-401–Cys-431. Ser-405 serves as the catalytic Charge relay system.

This sequence belongs to the peptidase S1 family.

It is found in the secreted. Mediates the proteolytic cleavage of HP/haptoglobin in the endoplasmic reticulum. The sequence is that of Complement C1r subcomponent-like protein (C1rl) from Rattus norvegicus (Rat).